A 468-amino-acid chain; its full sequence is MAVLTSRATDFPRWYQDVLAKAELADNGPVRGTMVIRPYGYAIWERMQADVDARIKAAGAVNAYFPLFIPESYLRREAEHVEGFSPELAVVTIGGGKELEEPVVVRPTSETIIGEYLAKWTQSYRDLPLLLNQWANVVRWELRPRLFLRSSEFLWQEGHTAHVDEAEAAAYARRIALEVYRDFLTDVLAIPVFIGTKTRKERFAGATNTMTCEGMMGDGKALQMATSHELGQNFARAFDIDFLGADGAKHLAWTTSWGSSTRMVGGLIMAHGDDNGLRIPPRLAPTQVVVLPVRDDETVVAKAREIAAALTDAGLRVQVDARSGLSFGRRVTDAEIKGIPVRVEVGPRDLAAGNVTLVRRDTSVKAAVPLAEAAARVPALLDEVQAGLHAEALALRESRTADVTTVADAAAAAQTGFARIPWRLVGEEGEARLAEDALTVRCLQTPDGEIPPAGGDPDDLICLIARSY.

It belongs to the class-II aminoacyl-tRNA synthetase family. ProS type 3 subfamily. Homodimer.

The protein resides in the cytoplasm. It carries out the reaction tRNA(Pro) + L-proline + ATP = L-prolyl-tRNA(Pro) + AMP + diphosphate. Its function is as follows. Catalyzes the attachment of proline to tRNA(Pro) in a two-step reaction: proline is first activated by ATP to form Pro-AMP and then transferred to the acceptor end of tRNA(Pro). This Frankia alni (strain DSM 45986 / CECT 9034 / ACN14a) protein is Proline--tRNA ligase.